The sequence spans 206 residues: Large ribosomal subunit protein uL4 (206 aa).

The interval 46-78 (GNRAQKDREQVKHTTKKPWRQKGTGRARAGMSS) is disordered. Basic residues predominate over residues 58–70 (HTTKKPWRQKGTG).

It belongs to the universal ribosomal protein uL4 family. In terms of assembly, part of the 50S ribosomal subunit.

In terms of biological role, one of the primary rRNA binding proteins, this protein initially binds near the 5'-end of the 23S rRNA. It is important during the early stages of 50S assembly. It makes multiple contacts with different domains of the 23S rRNA in the assembled 50S subunit and ribosome. Forms part of the polypeptide exit tunnel. This chain is Large ribosomal subunit protein uL4, found in Burkholderia lata (strain ATCC 17760 / DSM 23089 / LMG 22485 / NCIMB 9086 / R18194 / 383).